Here is a 59-residue protein sequence, read N- to C-terminus: Potassium channel toxin alpha-KTx 1.12 (59 aa).

The first 22 residues, 1-22 (MKILSVLLLALIICSIVGWSEA), serve as a signal peptide directing secretion. Residue glutamine 23 is modified to Pyrrolidone carboxylic acid. Disulfide bonds link cysteine 29–cysteine 50, cysteine 35–cysteine 55, and cysteine 39–cysteine 57. The interaction with Ca(2+)-activated K(+) channels stretch occupies residues 48 to 55 (GKCMNKKC).

The protein belongs to the short scorpion toxin superfamily. Potassium channel inhibitor family. Alpha-KTx 01 subfamily. Expressed by the venom gland.

Its subcellular location is the secreted. Potent selective inhibitor of high conductance (maxi-K), different medium and small conductance calcium-activated potassium channels (KCa1.1/KCNMA1 and others), as well as a voltage-dependent potassium channel (Kv1.3/KCNA3&gt;Kv1.2/KCNA2&gt;Kv1.6/KCNA3&gt;&gt;Shaker/Sh). It blocks channel activity by a simple bimolecular inhibition process. Functionally, has a pH-specific antimicrobial activity against bacteria (B.subtilis, E.coli and S.aureus) and the fungus C.albicans. This is Potassium channel toxin alpha-KTx 1.12 from Leiurus hebraeus (Hebrew deathstalker scorpion).